Here is an 898-residue protein sequence, read N- to C-terminus: MNKRRKFLFASVLAVQNSNFIYPSCQRCFSKIILESKRFTCPKCGSSGDTGSTNYRYKLSLKVAESSKLFFITVFGSCLDTFFGLTATGLHRYLGDSIKNLETLDSGRTQSLLTTAVEKCFVGQSFVFGVTNFGDVCGHDSDSSNFQQPCCKHRGEVRTLVASQIILPSPHVKGFTVIAYLHPLLHKKPHCGSQEHSSQSLTSDDSDSDLNNIQGSGNTSWFSESSVGEDFFRYWEPSLELTSSDSQVTSSDDFPASKQIMASGTPNQNRHCISVSEVTSSKNCHDSLQSLWSLHSCMDKNNTTGKLGEELGLPSPVCNSCHESRLSDSHFFPSQMQEPFEEHNLECYSKAEKNDYSQYDIACYQHHEVNTTPILQQRSSAFSLSSLKPEETANPSQNSDSLIWDDLPLSESLNKFLAVVESEVAVTEIDAKNRKQGMDKSIDKCHKNYSRLSLTPWRNTRALNTSCFSLRSSQAMMKDSGKEALFSNCKSNSSPHIQKESKADKTEAAVSIAGSRSDISEDFLPDTCSSALFTSSKDREAFITQKRTSGVLQQRNEISCRPSTSISDCSDLRSRYFTGCGQKLHSGTKGKLAIQNCSKKYSDASDLHKLENKHRWPKKEDDNFTICRKLTYPLETLCSSPESINTSKEMPYRPSNNNLTPSSSGDHEGSYNASADLFDYIAKDKDIGTEITKIPQDNLLPLEVPCTENYPINENRGQPSQKPSLQSISPSRYSRPRSQSDSECDFEESQDFVPCSQSTPVAGFHQRIHGLNGASKILPSIYSNPNANYKNRKNSPLTGQYQATSACSKNVKAFRQKPESPFVSSLTQANVFNHCPAAESLGNDVDEWVPPTTKKVFISDILGFRVMGLRKCLDLHYSPDPKELPRKKLIKVTHKTNI.

Disordered stretches follow at residues 191 to 210, 643 to 670, and 710 to 749; these read CGSQ…DSDL, SINT…HEGS, and YPIN…FEES. Polar residues-rich tracts occupy residues 643-664 and 710-725; these read SINT…PSSS and YPIN…KPSL. The segment covering 726–741 has biased composition (low complexity); that stretch reads QSISPSRYSRPRSQSD.

As to expression, highly expressed in the testis, spleen and heart. Expressed at high levels in the primary spermatocytes and to a lesser extent in the round spermatids. Also found in the bone marrow, brain, lung, kidney and liver.

It localises to the cytoplasm. The protein resides in the nucleus. Its function is as follows. May be an anti-apoptotic protein involved in DNA repair or cell survival. The sequence is that of DNA damage-induced apoptosis suppressor protein (Ddias) from Mus musculus (Mouse).